We begin with the raw amino-acid sequence, 82 residues long: Putative ribonuclease VapC34 (82 aa).

Asp-4 lines the Mg(2+) pocket.

This sequence belongs to the PINc/VapC protein family. Mg(2+) is required as a cofactor.

In terms of biological role, toxic component of a possible type II toxin-antitoxin (TA) system. A putative RNase. Its cognate antitoxin is VapB34. This chain is Putative ribonuclease VapC34 (vapC34), found in Mycobacterium tuberculosis (strain CDC 1551 / Oshkosh).